Here is a 265-residue protein sequence, read N- to C-terminus: Reduced viability upon starvation protein 161 (265 aa).

Positions 15 to 239 constitute a BAR domain; that stretch reads HSVIIKNVDK…LDQQSRDDYA (225 aa). Residues 126-193 adopt a coiled-coil conformation; it reads YFKEIEEAIK…NQLKTELPQL (68 aa).

Its subcellular location is the cytoplasm. It is found in the cytoskeleton. Functionally, component of a cytoskeletal structure that is required for the formation of endocytic vesicles at the plasma membrane level. The protein is Reduced viability upon starvation protein 161 (RVS161) of Saccharomyces cerevisiae (strain ATCC 204508 / S288c) (Baker's yeast).